Here is an 895-residue protein sequence, read N- to C-terminus: Eukaryotic translation initiation factor 3 subunit C (895 aa).

Positions 1 to 108 are disordered; that stretch reads MSGFFRKVGD…DSDSEEEVKK (108 aa). Composition is skewed to acidic residues over residues 11-31 and 52-75; these read SDSESDISSSEEELSELESGD and DDSDSDDDDSDDDDQDSLDSDDDN. One can recognise a PCI domain in the interval 638-812; that stretch reads FHMHINLELL…NVVSFHRLEL (175 aa). A compositionally biased stretch (basic and acidic residues) spans 838–860; it reads DAKLGEGKEQRSGAGGERGDREG. The segment at 838 to 895 is disordered; it reads DAKLGEGKEQRSGAGGERGDREGGQPGGRRERRGGSAARGRGRGRGRAQQFQALGQKV. Residues 884 to 895 are compositionally biased toward low complexity; that stretch reads RAQQFQALGQKV.

This sequence belongs to the eIF-3 subunit C family. In terms of assembly, component of the eukaryotic translation initiation factor 3 (eIF-3) complex.

Its subcellular location is the cytoplasm. Functionally, component of the eukaryotic translation initiation factor 3 (eIF-3) complex, which is involved in protein synthesis of a specialized repertoire of mRNAs and, together with other initiation factors, stimulates binding of mRNA and methionyl-tRNAi to the 40S ribosome. The eIF-3 complex specifically targets and initiates translation of a subset of mRNAs involved in cell proliferation. This is Eukaryotic translation initiation factor 3 subunit C from Mycosarcoma maydis (Corn smut fungus).